Consider the following 224-residue polypeptide: MTSRDSAAAEITPEVLLRAYACGIFPMAESVDDPTLFWVEPELRGIIPLGGFRVASRLARTVRSDAFTVTVNRDFKGVIDGCAAPQPGRDDTWINRRIRELYIGLHGIGHCHSVEVWQDGDLAGGLYGVSLGRAFFGESMFHRARDASKVALVHLVARLLAGGYELLDTQFVTDHLRSFGAIEVPRQRYRSMLDDALQGIAAFDALPVDQPVTGAKALEIIAAH.

This sequence belongs to the L/F-transferase family.

It localises to the cytoplasm. It catalyses the reaction N-terminal L-lysyl-[protein] + L-leucyl-tRNA(Leu) = N-terminal L-leucyl-L-lysyl-[protein] + tRNA(Leu) + H(+). It carries out the reaction N-terminal L-arginyl-[protein] + L-leucyl-tRNA(Leu) = N-terminal L-leucyl-L-arginyl-[protein] + tRNA(Leu) + H(+). The enzyme catalyses L-phenylalanyl-tRNA(Phe) + an N-terminal L-alpha-aminoacyl-[protein] = an N-terminal L-phenylalanyl-L-alpha-aminoacyl-[protein] + tRNA(Phe). Functionally, functions in the N-end rule pathway of protein degradation where it conjugates Leu, Phe and, less efficiently, Met from aminoacyl-tRNAs to the N-termini of proteins containing an N-terminal arginine or lysine. The sequence is that of Leucyl/phenylalanyl-tRNA--protein transferase from Rhodopseudomonas palustris (strain HaA2).